A 465-amino-acid chain; its full sequence is L-seryl-tRNA(Sec) selenium transferase (465 aa).

K294 bears the N6-(pyridoxal phosphate)lysine mark.

Belongs to the SelA family. The cofactor is pyridoxal 5'-phosphate.

It is found in the cytoplasm. It carries out the reaction L-seryl-tRNA(Sec) + selenophosphate + H(+) = L-selenocysteinyl-tRNA(Sec) + phosphate. Its pathway is aminoacyl-tRNA biosynthesis; selenocysteinyl-tRNA(Sec) biosynthesis; selenocysteinyl-tRNA(Sec) from L-seryl-tRNA(Sec) (bacterial route): step 1/1. In terms of biological role, converts seryl-tRNA(Sec) to selenocysteinyl-tRNA(Sec) required for selenoprotein biosynthesis. The sequence is that of L-seryl-tRNA(Sec) selenium transferase (selA) from Desulfomicrobium baculatum (Desulfovibrio baculatus).